The primary structure comprises 334 residues: MSEPSAKKQKFANSLEALKATGTTVVADTGDFESIAKFTPQDATTNPSLILAAAKQQAYAKLIDSAVQYGKKQGQNIDEQVEIAVDKLLVEFGTAILKVVPGRVSTEVDARLSFDKDATVKKALEIIKLYEAEGISKDRVLIKIASTWEGIQAAQELEKEHDIHVNLTLLFSFAQAVAAAEANVTLISPFVGRILDWYKASTGETYTAETDPGVISVKSIYNYYKKHGYNTIVMGASFRNVGEIKALAGVDFLTISPKLLDELLSSDEPVAKILDPESAKAEGSERVSFINDEPKFRFELNEDAMATEKLSEGIRKFSADIVTLFDLIKAKIQA.

Position 2 is an N-acetylserine (serine 2). The Schiff-base intermediate with substrate role is filled by lysine 143.

It belongs to the transaldolase family. Type 1 subfamily. As to quaternary structure, homodimer.

It carries out the reaction D-sedoheptulose 7-phosphate + D-glyceraldehyde 3-phosphate = D-erythrose 4-phosphate + beta-D-fructose 6-phosphate. It functions in the pathway carbohydrate degradation; pentose phosphate pathway; D-glyceraldehyde 3-phosphate and beta-D-fructose 6-phosphate from D-ribose 5-phosphate and D-xylulose 5-phosphate (non-oxidative stage): step 2/3. Functionally, transaldolase is important for the balance of metabolites in the pentose-phosphate pathway. In Kluyveromyces lactis (strain ATCC 8585 / CBS 2359 / DSM 70799 / NBRC 1267 / NRRL Y-1140 / WM37) (Yeast), this protein is Transaldolase (TAL1).